The primary structure comprises 1141 residues: Isoleucine--tRNA ligase, cytoplasmic (1141 aa).

The 'HIGH' region signature appears at 50–60 (PFATGLPHYGH). Positions 601–605 (KMSKS) match the 'KMSKS' region motif. An ATP-binding site is contributed by Lys604.

This sequence belongs to the class-I aminoacyl-tRNA synthetase family.

Its subcellular location is the cytoplasm. It carries out the reaction tRNA(Ile) + L-isoleucine + ATP = L-isoleucyl-tRNA(Ile) + AMP + diphosphate. The chain is Isoleucine--tRNA ligase, cytoplasmic from Caenorhabditis elegans.